Here is a 244-residue protein sequence, read N- to C-terminus: 1-(5-phosphoribosyl)-5-[(5-phosphoribosylamino)methylideneamino] imidazole-4-carboxamide isomerase (244 aa).

D10 (proton acceptor) is an active-site residue. D132 (proton donor) is an active-site residue.

The protein belongs to the HisA/HisF family.

It localises to the cytoplasm. It catalyses the reaction 1-(5-phospho-beta-D-ribosyl)-5-[(5-phospho-beta-D-ribosylamino)methylideneamino]imidazole-4-carboxamide = 5-[(5-phospho-1-deoxy-D-ribulos-1-ylimino)methylamino]-1-(5-phospho-beta-D-ribosyl)imidazole-4-carboxamide. Its pathway is amino-acid biosynthesis; L-histidine biosynthesis; L-histidine from 5-phospho-alpha-D-ribose 1-diphosphate: step 4/9. The sequence is that of 1-(5-phosphoribosyl)-5-[(5-phosphoribosylamino)methylideneamino] imidazole-4-carboxamide isomerase from Xanthomonas axonopodis pv. citri (strain 306).